The sequence spans 520 residues: Ribonuclease Y (520 aa).

The helical transmembrane segment at 3-23 (IEIAIVLILAAAGLGYFVGNM) threads the bilayer. One can recognise a KH domain in the interval 210-273 (SVSVVALPSD…EVAKIALEKL (64 aa)). Residues 336–429 (VYQHSLEVAF…VQAADALSGA (94 aa)) enclose the HD domain.

This sequence belongs to the RNase Y family.

The protein localises to the cell membrane. Endoribonuclease that initiates mRNA decay. This Geobacter metallireducens (strain ATCC 53774 / DSM 7210 / GS-15) protein is Ribonuclease Y.